Consider the following 176-residue polypeptide: MENVVLVDENDNRVGCINKIDAHLNGDHLHRAFSCFIINSKNEVYIQQRAQSKLLWPGYWSNSYCSHPRPDEEISHAVMRRAEEELGIVINEEPKFLYKFQYKEKYKDVGYEHELCHVFVVFTDTPPTENPKEVSAGFFINIKDVQEYIHNNEEFCTPWFKKEWADILQNHFDKLC.

Mn(2+) contacts are provided by His-23 and His-30. Residues 28 to 162 form the Nudix hydrolase domain; the sequence is HLHRAFSCFI…EEFCTPWFKK (135 aa). The active site involves Cys-65. Residue Cys-65 participates in Mg(2+) binding. His-67 contributes to the Mn(2+) binding site. Residue Glu-85 coordinates Mg(2+). Mn(2+)-binding residues include Glu-112 and Glu-114. Glu-114 is an active-site residue.

The protein belongs to the IPP isomerase type 1 family. Homodimer. Mg(2+) is required as a cofactor. Requires Mn(2+) as cofactor.

It is found in the cytoplasm. The catalysed reaction is isopentenyl diphosphate = dimethylallyl diphosphate. The protein operates within isoprenoid biosynthesis; dimethylallyl diphosphate biosynthesis; dimethylallyl diphosphate from isopentenyl diphosphate: step 1/1. Its function is as follows. Catalyzes the 1,3-allylic rearrangement of the homoallylic substrate isopentenyl (IPP) to its highly electrophilic allylic isomer, dimethylallyl diphosphate (DMAPP). This Photorhabdus laumondii subsp. laumondii (strain DSM 15139 / CIP 105565 / TT01) (Photorhabdus luminescens subsp. laumondii) protein is Isopentenyl-diphosphate Delta-isomerase 1.